The primary structure comprises 342 residues: S-adenosylmethionine:tRNA ribosyltransferase-isomerase (342 aa).

It belongs to the QueA family. In terms of assembly, monomer.

Its subcellular location is the cytoplasm. The enzyme catalyses 7-aminomethyl-7-carbaguanosine(34) in tRNA + S-adenosyl-L-methionine = epoxyqueuosine(34) in tRNA + adenine + L-methionine + 2 H(+). It participates in tRNA modification; tRNA-queuosine biosynthesis. Transfers and isomerizes the ribose moiety from AdoMet to the 7-aminomethyl group of 7-deazaguanine (preQ1-tRNA) to give epoxyqueuosine (oQ-tRNA). The sequence is that of S-adenosylmethionine:tRNA ribosyltransferase-isomerase from Streptococcus pneumoniae (strain Hungary19A-6).